Reading from the N-terminus, the 1137-residue chain is Otoancorin (1137 aa).

The N-terminal stretch at 1-23 (MSQGPRTCSLLLVLLLSHGGAYQ) is a signal peptide. Asn-156, Asn-211, Asn-244, Asn-289, Asn-321, Asn-380, Asn-384, Asn-530, Asn-594, Asn-740, and Asn-798 each carry an N-linked (GlcNAc...) asparagine glycan. Residues 1095-1115 (HSWQTDPLSSSPTWPASTGSP) show a composition bias toward polar residues. Residues 1095-1119 (HSWQTDPLSSSPTWPASTGSPTGEP) form a disordered region. Gly-1113 carries the GPI-anchor amidated glycine lipid modification. Residues 1114–1137 (SPTGEPASQALWLGCTLLLLTAKS) constitute a propeptide, removed in mature form.

Belongs to the stereocilin family. Expressed in the inner ear and vestibule.

Its subcellular location is the apical cell membrane. It localises to the secreted. It is found in the extracellular space. The protein localises to the extracellular matrix. Functionally, may act as an adhesion molecule. The chain is Otoancorin (Otoa) from Mus musculus (Mouse).